A 675-amino-acid chain; its full sequence is Protein distal antenna (675 aa).

The HTH psq-type domain occupies 5–56 (TKGKRPLRHLTATDKIDAIQRIHDGESKASVARDIGVPESTLRGWCKNEEKL). Positions 32 to 52 (KASVARDIGVPESTLRGWCKN) form a DNA-binding region, H-T-H motif. Disordered stretches follow at residues 239 to 269 (QSLRNARPKANTSQSPRTSNLSDVNGDKNPS), 337 to 393 (LYSS…PEDT), 458 to 534 (LNII…SKCN), 546 to 596 (FQNP…AHKS), and 655 to 675 (ERQQQNAVSSGEERTRVRRRK). Residues 339-368 (SSMPRPSSPQQSSSPPQQHQQVQHHPSTQT) are compositionally biased toward low complexity. Residues 369-384 (PTPPIVSTPQPTPPSS) are compositionally biased toward pro residues. A compositionally biased stretch (basic and acidic residues) spans 469–478 (VKSEPEDLSN). Over residues 479 to 493 (HNHSSSNAAAVAAPA) the composition is skewed to low complexity. Polar residues predominate over residues 499-508 (FNPSPSTSAK). Acidic residues predominate over residues 513-528 (QEDDEEQAGPADDESP). Low complexity predominate over residues 559–579 (NLSIRSNNSPRRRSVSPAVSN).

Homomers. Interacts with itself, danr, ey and dac to form a complex (or complexes) containing the RD factors.

The protein localises to the nucleus. Probable transcription factor with a role in the retinal determination (RD) network. Contributes to differentiation of antenna-specific characteristics. The polypeptide is Protein distal antenna (Aedes aegypti (Yellowfever mosquito)).